Here is a 274-residue protein sequence, read N- to C-terminus: MEALRQRIEAAFEARAEITPNSVEPSVRADVEKAISMLDKGEARVAEKIDGQWHVHQWLKKAVLLSFRIFDNGVIDGGETKYFDKVPMKFADYDEARFKEEAIRVVPPATVRKGSFIGKNTVLMPSYVNLGAYVDEGTMVDTWATVGSCAQIGKNVHLSGGVGIGGVLEPLQAGPTIIEDNCFIGARSEVVEGVIVEEGSVISMGVYLGQSTRIYDRETGEVHYGRVPAGSVVVSGTLPSKCGTYNLYAAIIVKKVDAKTRGKVGINELLRIVD.

Substrate contacts are provided by R104 and D141.

It belongs to the transferase hexapeptide repeat family. Homotrimer.

Its subcellular location is the cytoplasm. The enzyme catalyses (S)-2,3,4,5-tetrahydrodipicolinate + succinyl-CoA + H2O = (S)-2-succinylamino-6-oxoheptanedioate + CoA. It participates in amino-acid biosynthesis; L-lysine biosynthesis via DAP pathway; LL-2,6-diaminopimelate from (S)-tetrahydrodipicolinate (succinylase route): step 1/3. The protein is 2,3,4,5-tetrahydropyridine-2,6-dicarboxylate N-succinyltransferase of Shewanella sediminis (strain HAW-EB3).